Here is a 260-residue protein sequence, read N- to C-terminus: 14-3-3-like protein C (260 aa).

It belongs to the 14-3-3 family.

The polypeptide is 14-3-3-like protein C (Nicotiana tabacum (Common tobacco)).